Reading from the N-terminus, the 487-residue chain is Malonate-semialdehyde dehydrogenase (487 aa).

Residues Ala150, Phe152, Lys176, Glu179, Arg180, Ser229, and Thr251 each contribute to the NAD(+) site. The Nucleophile role is filled by Cys284. Glu382 contacts NAD(+).

Belongs to the aldehyde dehydrogenase family. IolA subfamily. As to quaternary structure, homotetramer.

The catalysed reaction is 3-oxopropanoate + NAD(+) + CoA + H2O = hydrogencarbonate + acetyl-CoA + NADH + H(+). It carries out the reaction 2-methyl-3-oxopropanoate + NAD(+) + CoA + H2O = propanoyl-CoA + hydrogencarbonate + NADH + H(+). Its pathway is polyol metabolism; myo-inositol degradation into acetyl-CoA; acetyl-CoA from myo-inositol: step 7/7. In terms of biological role, catalyzes the oxidation of malonate semialdehyde (MSA) and methylmalonate semialdehyde (MMSA) into acetyl-CoA and propanoyl-CoA, respectively. Is involved in a myo-inositol catabolic pathway. Bicarbonate, and not CO2, is the end-product of the enzymatic reaction. This is Malonate-semialdehyde dehydrogenase from Bacillus velezensis (strain DSM 23117 / BGSC 10A6 / LMG 26770 / FZB42) (Bacillus amyloliquefaciens subsp. plantarum).